The primary structure comprises 121 residues: Small ribosomal subunit protein uS13 (121 aa).

A disordered region spans residues 93-121 (RGLPVRGQNTKNNARTRKGPRRTVANKKK). The segment covering 106-121 (ARTRKGPRRTVANKKK) has biased composition (basic residues).

The protein belongs to the universal ribosomal protein uS13 family. Part of the 30S ribosomal subunit. Forms a loose heterodimer with protein S19. Forms two bridges to the 50S subunit in the 70S ribosome.

Functionally, located at the top of the head of the 30S subunit, it contacts several helices of the 16S rRNA. In the 70S ribosome it contacts the 23S rRNA (bridge B1a) and protein L5 of the 50S subunit (bridge B1b), connecting the 2 subunits; these bridges are implicated in subunit movement. Contacts the tRNAs in the A and P-sites. This is Small ribosomal subunit protein uS13 from Bacillus licheniformis (strain ATCC 14580 / DSM 13 / JCM 2505 / CCUG 7422 / NBRC 12200 / NCIMB 9375 / NCTC 10341 / NRRL NRS-1264 / Gibson 46).